The primary structure comprises 71 residues: Keratin-associated protein 6-1 (71 aa).

This sequence belongs to the KRTAP type 6 family. In terms of assembly, interacts with hair keratins.

In the hair cortex, hair keratin intermediate filaments are embedded in an interfilamentous matrix, consisting of hair keratin-associated proteins (KRTAP), which are essential for the formation of a rigid and resistant hair shaft through their extensive disulfide bond cross-linking with abundant cysteine residues of hair keratins. The matrix proteins include the high-sulfur and high-glycine-tyrosine keratins. In Homo sapiens (Human), this protein is Keratin-associated protein 6-1 (KRTAP6-1).